Consider the following 307-residue polypeptide: Mitochondrial glycine transporter (307 aa).

3 Solcar repeats span residues 8-87 (PRNS…MRSS), 115-199 (LTMY…SKQL), and 221-305 (TSTT…LVKR). Transmembrane regions (helical) follow at residues 14 to 39 (LIGG…TRIQ), 62 to 88 (GTLP…RSSL), 121 to 146 (LLTG…VRYE), 174 to 197 (GFGA…EKSK), 225 to 251 (VNTT…KTRM), and 280 to 298 (GLSM…AWGI).

This sequence belongs to the mitochondrial carrier (TC 2.A.29) family. SLC25A38 subfamily.

It localises to the mitochondrion. The protein localises to the mitochondrion inner membrane. It catalyses the reaction glycine(in) = glycine(out). Functionally, mitochondrial glycine transporter that imports glycine into the mitochondrial matrix. Plays an important role in providing glycine for the first enzymatic step in heme biosynthesis, the condensation of glycine with succinyl-CoA to produce 5-aminolevulinate (ALA) in the mitochondrial matrix. In Saccharomyces cerevisiae (strain ATCC 204508 / S288c) (Baker's yeast), this protein is Mitochondrial glycine transporter.